Reading from the N-terminus, the 352-residue chain is MPVLHNRISNKELKARMLAETQPRTTISFYKYFNILNPLDFRNSLYQQFTDLSVFGRVYIAKEGINAQISLPTHNLEAFKALLYSVDPALDNLRLNIALDDDGKSFWVLRMKVRDRVVADGIDDETFDPSKTGEYLKAEQVNQMLDNPDTLFVDMRNHYEYEVGHFENAIEVPSDTFREQLPMVAEMLQDNKDKNIVMYCTGGIRCEKASAYMLHNGFKNVYHVEGGIIEYARKAREQGLPVRFVGKNFVFDERMGERISDDVIAHCHQCGVSCDSHTNCKNEGCHLLFIQCPECATKFEGCCSEMCREEVRLPETEQRARRAGRENGAKIFNKSRHRLQDGLNSTSLQSVE.

The region spanning 146 to 240 is the Rhodanese domain; sequence DNPDTLFVDM…YARKAREQGL (95 aa). The active-site Cysteine persulfide intermediate is Cys200. The span at 315–328 shows a compositional bias: basic and acidic residues; the sequence is ETEQRARRAGRENG. The interval 315 to 352 is disordered; the sequence is ETEQRARRAGRENGAKIFNKSRHRLQDGLNSTSLQSVE. Over residues 342-352 the composition is skewed to polar residues; sequence GLNSTSLQSVE.

This sequence belongs to the TrhO family.

It catalyses the reaction uridine(34) in tRNA + AH2 + O2 = 5-hydroxyuridine(34) in tRNA + A + H2O. Its function is as follows. Catalyzes oxygen-dependent 5-hydroxyuridine (ho5U) modification at position 34 in tRNAs. In Photorhabdus laumondii subsp. laumondii (strain DSM 15139 / CIP 105565 / TT01) (Photorhabdus luminescens subsp. laumondii), this protein is tRNA uridine(34) hydroxylase.